The primary structure comprises 340 residues: Phenylalanine--tRNA ligase alpha subunit (340 aa).

Glu254 is a binding site for Mg(2+).

The protein belongs to the class-II aminoacyl-tRNA synthetase family. Phe-tRNA synthetase alpha subunit type 1 subfamily. As to quaternary structure, tetramer of two alpha and two beta subunits. Mg(2+) is required as a cofactor.

It is found in the cytoplasm. The enzyme catalyses tRNA(Phe) + L-phenylalanine + ATP = L-phenylalanyl-tRNA(Phe) + AMP + diphosphate + H(+). The polypeptide is Phenylalanine--tRNA ligase alpha subunit (Chloroherpeton thalassium (strain ATCC 35110 / GB-78)).